The primary structure comprises 269 residues: Fructose-2,6-bisphosphatase TIGAR (269 aa).

The Tele-phosphohistidine intermediate role is filled by H11. Residue E89 is the Proton donor/acceptor of the active site.

It belongs to the phosphoglycerate mutase family. Interacts with HK2; the interaction increases hexokinase HK2 activity in a hypoxia- and HIF1A-dependent manner, resulting in the regulation of mitochondrial membrane potential, thus increasing NADPH production and decreasing intracellular ROS levels. In terms of tissue distribution, expressed in olfactory bulb, cerebellum, and cortex. Expressed in neurons and astrocytes (at protein level). Expressed in intestinal crypt.

It is found in the cytoplasm. The protein localises to the nucleus. The protein resides in the mitochondrion. The enzyme catalyses beta-D-fructose 2,6-bisphosphate + H2O = beta-D-fructose 6-phosphate + phosphate. Functionally, fructose-bisphosphatase hydrolyzing fructose-2,6-bisphosphate as well as fructose-1,6-bisphosphate. Acts as a negative regulator of glycolysis by lowering intracellular levels of fructose-2,6-bisphosphate in a p53/TP53-dependent manner, resulting in the pentose phosphate pathway (PPP) activation and NADPH production. Contributes to the generation of reduced glutathione to cause a decrease in intracellular reactive oxygen species (ROS) content, correlating with its ability to protect cells from oxidative or metabolic stress-induced cell death. Plays a role in promoting protection against cell death during hypoxia by decreasing mitochondria ROS levels in a HK2-dependent manner through a mechanism that is independent of its fructose-bisphosphatase activity. In response to cardiac damage stress, mediates p53-induced inhibition of myocyte mitophagy through ROS levels reduction and the subsequent inactivation of BNIP3. Reduced mitophagy results in an enhanced apoptotic myocyte cell death, and exacerbates cardiac damage. Plays a role in adult intestinal regeneration; contributes to the growth, proliferation and survival of intestinal crypts following tissue ablation. Plays a neuroprotective role against ischemic brain damage by enhancing PPP flux and preserving mitochondria functions. Protects glioma cells from hypoxia- and ROS-induced cell death by inhibiting glycolysis and activating mitochondrial energy metabolism and oxygen consumption in a TKTL1-dependent and p53/TP53-independent manner. Plays a role in cancer cell survival by promoting DNA repair through activating PPP flux in a CDK5-ATM-dependent signaling pathway during hypoxia and/or genome stress-induced DNA damage responses. Involved in intestinal tumor progression. This is Fructose-2,6-bisphosphatase TIGAR from Mus musculus (Mouse).